The chain runs to 235 residues: Large ribosomal subunit protein uL3 (235 aa).

Residues 138 to 157 form a disordered region; it reads SVSHRSHGSTGGRQDPGKTF. Gln151 bears the N5-methylglutamine mark.

The protein belongs to the universal ribosomal protein uL3 family. In terms of assembly, part of the 50S ribosomal subunit. Forms a cluster with proteins L14 and L19. Methylated by PrmB.

In terms of biological role, one of the primary rRNA binding proteins, it binds directly near the 3'-end of the 23S rRNA, where it nucleates assembly of the 50S subunit. The polypeptide is Large ribosomal subunit protein uL3 (Rhodospirillum centenum (strain ATCC 51521 / SW)).